The chain runs to 485 residues: Aldehyde dehydrogenase family 3 member A2 (485 aa).

Residues 1–463 are Cytoplasmic-facing; the sequence is MEREVQRVRQ…FLLRRFNKEK (463 aa). Residue 185–190 coordinates NAD(+); that stretch reads GNTAVG. Catalysis depends on residues E207 and C241. S293 is subject to Phosphoserine. The helical transmembrane segment at 464–484 threads the bilayer; that stretch reads LGLLVLTFLGIVAAVLVNAGY. The short motif at 481–484 is the Prevents secretion from ER element; it reads NAGY.

Belongs to the aldehyde dehydrogenase family. As to quaternary structure, homodimer.

The protein localises to the microsome membrane. It is found in the endoplasmic reticulum membrane. The catalysed reaction is an aldehyde + NAD(+) + H2O = a carboxylate + NADH + 2 H(+). The enzyme catalyses a fatty aldehyde + NAD(+) + H2O = a fatty acid + NADH + 2 H(+). It catalyses the reaction (2E)-hexadecenal + NAD(+) + H2O = (E)-hexadec-2-enoate + NADH + 2 H(+). It carries out the reaction hexadecanoate + NADH + 2 H(+) = hexadecanal + NAD(+) + H2O. The catalysed reaction is 22-oxodocosanoate + NAD(+) + H2O = docosanedioate + NADH + 2 H(+). The enzyme catalyses 2,6,10,14-tetramethylpentadecanal + NAD(+) + H2O = 2,6,10,14-tetramethylpentadecanoate + NADH + 2 H(+). It catalyses the reaction octadecanal + NAD(+) + H2O = octadecanoate + NADH + 2 H(+). It carries out the reaction dodecanoate + NADH + 2 H(+) = dodecanal + NAD(+) + H2O. The catalysed reaction is decanal + NAD(+) + H2O = decanoate + NADH + 2 H(+). The enzyme catalyses tetradecanal + NAD(+) + H2O = tetradecanoate + NADH + 2 H(+). It catalyses the reaction octanal + NAD(+) + H2O = octanoate + NADH + 2 H(+). It carries out the reaction heptanal + NAD(+) + H2O = heptanoate + NADH + 2 H(+). The catalysed reaction is (2E,6E)-farnesal + NAD(+) + H2O = (2E,6E)-farnesoate + NADH + 2 H(+). In terms of biological role, catalyzes the oxidation of medium and long-chain aliphatic aldehydes to fatty acids. Active on a variety of saturated and unsaturated aliphatic aldehydes between 6 and 24 carbons in length. Responsible for conversion of the sphingosine 1-phosphate (S1P) degradation product hexadecenal to hexadecenoic acid. The protein is Aldehyde dehydrogenase family 3 member A2 (ALDH3A2) of Macaca fascicularis (Crab-eating macaque).